A 78-amino-acid polypeptide reads, in one-letter code: Large ribosomal subunit protein bL28 (78 aa).

This sequence belongs to the bacterial ribosomal protein bL28 family.

The protein is Large ribosomal subunit protein bL28 of Escherichia coli O139:H28 (strain E24377A / ETEC).